A 488-amino-acid chain; its full sequence is Palmitoyltransferase ZDHHC14 (488 aa).

Residues 1-60 (MPPGGGGPMKDCEYSQISTHSSSPMESPHKKKKIAARRKWEVFPGRNKFFCNGRIMMARQ) are Cytoplasmic-facing. The helical transmembrane segment at 61 to 81 (TGVFYLTLVLILVTSGLFFAF) threads the bilayer. At 82–89 (DCPYLAVK) the chain is on the lumenal side. A helical membrane pass occupies residues 90-110 (ITPAIPAVAGILFFFVMGTLL). The Cytoplasmic segment spans residues 111–208 (RTSFSDPGVL…GNCVGKRNYR (98 aa)). The DHHC domain occupies 165 to 215 (KYCFTCKIFRPPRASHCSLCDNCVERFDHHCPWVGNCVGKRNYRFFYMFIL). Cys195 serves as the catalytic S-palmitoyl cysteine intermediate. Residues 209-229 (FFYMFILSLSFLTVFIFAFVI) traverse the membrane as a helical segment. Residues 230–255 (THVILRSQQTGFLNALKDSPASVLEA) are Lumenal-facing. A helical transmembrane segment spans residues 256-276 (VVCFFSVWSIVGLSGFHTYLI). Topologically, residues 277–488 (SSNQTTNEDI…VRGLVKLSSV (212 aa)) are cytoplasmic. Ser455 is subject to Phosphoserine.

This sequence belongs to the DHHC palmitoyltransferase family. ERF2/ZDHHC9 subfamily. As to expression, widely expressed.

It is found in the endoplasmic reticulum membrane. It localises to the golgi apparatus. Its subcellular location is the golgi stack membrane. The enzyme catalyses L-cysteinyl-[protein] + hexadecanoyl-CoA = S-hexadecanoyl-L-cysteinyl-[protein] + CoA. Functionally, palmitoyltransferase that could catalyze the addition of palmitate onto various protein substrates. May have a palmitoyltransferase activity toward the beta-2 adrenergic receptor/ADRB2 and thereby regulate G protein-coupled receptor signaling. May play a role in cell differentiation and apoptosis. The chain is Palmitoyltransferase ZDHHC14 from Homo sapiens (Human).